A 754-amino-acid chain; its full sequence is tRNA(Met) cytidine acetyltransferase TmcA (754 aa).

The segment at 181–202 (GISFDAAPPRVPTEKDRRSPRR) is disordered. Over residues 192-202 (PTEKDRRSPRR) the composition is skewed to basic and acidic residues. ATP is bound by residues glutamine 212, 236-245 (GRGKSSAAGL), and arginine 383. The 186-residue stretch at 418-603 (VSYRALSPDD…YSALMTRPLS (186 aa)) folds into the N-acetyltransferase domain. Residues 529 to 531 (IAT), 536 to 542 (RSSGLGS), and glutamate 568 contribute to the acetyl-CoA site.

This sequence belongs to the RNA cytidine acetyltransferase family. TmcA subfamily.

Its subcellular location is the cytoplasm. It catalyses the reaction cytidine(34) in elongator tRNA(Met) + acetyl-CoA + ATP + H2O = N(4)-acetylcytidine(34) in elongator tRNA(Met) + ADP + phosphate + CoA + H(+). Functionally, catalyzes the formation of N(4)-acetylcytidine (ac(4)C) at the wobble position of tRNA(Met), by using acetyl-CoA as an acetyl donor and ATP (or GTP). The protein is tRNA(Met) cytidine acetyltransferase TmcA of Haloferax volcanii (strain ATCC 29605 / DSM 3757 / JCM 8879 / NBRC 14742 / NCIMB 2012 / VKM B-1768 / DS2) (Halobacterium volcanii).